The sequence spans 368 residues: N-acetylneuraminate epimerase (368 aa).

The signal sequence occupies residues 1 to 19 (MNKTIMALAIMMASFAANA). Kelch repeat units follow at residues 40 to 84 (TVYI…AFID), 86 to 137 (NLYV…FVHN), 139 to 173 (KAYVTGGVNQNIFNGYFEDLNEAGKDSTAIDKINA), 174 to 219 (HYFD…VNKG), 222 to 265 (TWLI…VAGG), 287 to 336 (ENYQ…PWNN), and 338 to 367 (LLIIGGETAGGKAVTDSVLISVKDNKVTVQ). The active-site Proton acceptor is the E228.

This sequence belongs to the NanM family. Homodimer.

The protein localises to the periplasm. It carries out the reaction N-acetyl-alpha-neuraminate = N-acetyl-beta-neuraminate. In terms of biological role, converts alpha-N-acetylneuranimic acid (Neu5Ac) to the beta-anomer, accelerating the equilibrium between the alpha- and beta-anomers. Probably facilitates sialidase-negative bacteria to compete successfully for limited amounts of extracellular Neu5Ac, which is likely taken up in the beta-anomer. In addition, the rapid removal of sialic acid from solution might be advantageous to the bacterium to damp down host responses. This chain is N-acetylneuraminate epimerase, found in Shigella flexneri serotype 5b (strain 8401).